We begin with the raw amino-acid sequence, 419 residues long: eIF5-mimic protein 1 (419 aa).

Residues 1–22 (MNKHQKPVLTGQRFKTRKRDEK) are disordered. At lysine 117 the chain carries N6-acetyllysine. One can recognise a W2 domain in the interval 248–415 (VQQSLGTRKE…QNAEEESESE (168 aa)). Phosphoserine occurs at positions 412 and 414.

This sequence belongs to the BZW family. As to quaternary structure, interacts with EIF3E, EIF2S2 and EIF3C.

Its subcellular location is the cytoplasm. Its function is as follows. Translation initiation regulator which represses non-AUG initiated translation and repeat-associated non-AUG (RAN) initiated translation by acting as a competitive inhibitor of eukaryotic translation initiation factor 5 (EIF5) function. Increases the accuracy of translation initiation by impeding EIF5-dependent translation from non-AUG codons by competing with it for interaction with EIF2S2 within the 43S pre-initiation complex (PIC) in an EIF3C-binding dependent manner. The sequence is that of eIF5-mimic protein 1 (BZW2) from Macaca fascicularis (Crab-eating macaque).